Consider the following 234-residue polypeptide: MKHLPIIALDFPSGQEALAFLEPFEGTPLFVKVGMELFYQEGPVILEALKEKNCRIFLDLKLHDIPTTVKKAMNRLAVLGVDLVNVHAAGGKQMMQAALEGLESGTPAGQKRPDIIAVTQLTSTSEDMMRSELLIDRSLQETVIRYGQLAYESGLDGVVCSVHESKALHEHISPDFLTVTPGIRLLNDQTDDQKRVATPAYAKEQGVSQIVVGRSITKADKPLEAYHQILKEWE.

Substrate is bound by residues Asp-10, Lys-32, 59 to 68, Thr-122, Arg-184, Gln-193, Gly-213, and Arg-214; that span reads DLKLHDIPTT. The active-site Proton donor is the Lys-61.

The protein belongs to the OMP decarboxylase family. Type 1 subfamily. As to quaternary structure, homodimer.

The catalysed reaction is orotidine 5'-phosphate + H(+) = UMP + CO2. Its pathway is pyrimidine metabolism; UMP biosynthesis via de novo pathway; UMP from orotate: step 2/2. In terms of biological role, catalyzes the decarboxylation of orotidine 5'-monophosphate (OMP) to uridine 5'-monophosphate (UMP). This chain is Orotidine 5'-phosphate decarboxylase, found in Bacillus pumilus (strain SAFR-032).